The primary structure comprises 263 residues: MALASVLERPLSVNRRGFFGLGGRADLLDLGPGSPSDGLSLAAPSWGVPEEPRIEILHGTTTLAFKFRHGVIVAADSRATAGAYIASQTVKKVIEINPYLLGTMAGGAADCSFWERLLARQCRIYELRNKERISVAAASKLLANMVYQYKGMGLSMGTMICGWDKRGPGLYYVDSEGNRISGATFSVGSGSVYAYGVMDRGYSYDLEVEEAYDLARRAIYQATYRDAYSGGSVSLYHVREDGWIRVSSDNVADLHDKYSGSTH.

Residues 1–59 (MALASVLERPLSVNRRGFFGLGGRADLLDLGPGSPSDGLSLAAPSWGVPEEPRIEILHG) constitute a propeptide, removed in mature form. T60 acts as the Nucleophile in catalysis. Residue A108 participates in bortezomib binding.

Belongs to the peptidase T1B family. As to quaternary structure, the 26S proteasome consists of a 20S proteasome core and two 19S regulatory subunits. The 20S proteasome core is a barrel-shaped complex made of 28 subunits that are arranged in four stacked rings. The two outer rings are each formed by seven alpha subunits, and the two inner rings are formed by seven beta subunits. The proteolytic activity is exerted by three beta-subunits PSMB5, PSMB6 and PSMB7. Directly interacts with POMP. Interacts with ABCB1 and TAP1.

Its subcellular location is the cytoplasm. The protein localises to the nucleus. It carries out the reaction Cleavage of peptide bonds with very broad specificity.. Its function is as follows. Component of the 20S core proteasome complex involved in the proteolytic degradation of most intracellular proteins. This complex plays numerous essential roles within the cell by associating with different regulatory particles. Associated with two 19S regulatory particles, forms the 26S proteasome and thus participates in the ATP-dependent degradation of ubiquitinated proteins. The 26S proteasome plays a key role in the maintenance of protein homeostasis by removing misfolded or damaged proteins that could impair cellular functions, and by removing proteins whose functions are no longer required. Associated with the PA200 or PA28, the 20S proteasome mediates ubiquitin-independent protein degradation. This type of proteolysis is required in several pathways including spermatogenesis (20S-PA200 complex) or generation of a subset of MHC class I-presented antigenic peptides (20S-PA28 complex). Within the 20S core complex, PSMB5 displays a chymotrypsin-like activity. This chain is Proteasome subunit beta type-5, found in Bos taurus (Bovine).